The chain runs to 721 residues: BBSome complex member BBS2 (721 aa).

The stretch at 325–369 (KGNLLDTSVEQDLIRELSQKKQNLLLELRNYEESTKAELSSPLNE) forms a coiled coil.

Part of BBSome complex, that contains BBS1, BBS2, BBS4, BBS5, BBS7, BBS8/TTC8, BBS9 and BBIP10. Interacts (via C-terminus) with BBS7. Interacts (via coiled coil domain) with MKKS. Interacts with CCDC28B. Interacts with DLEC1.

Its subcellular location is the cell projection. The protein resides in the cilium membrane. The protein localises to the cytoplasm. It is found in the cytoskeleton. It localises to the microtubule organizing center. Its subcellular location is the centrosome. The protein resides in the centriolar satellite. The BBSome complex is thought to function as a coat complex required for sorting of specific membrane proteins to the primary cilia. The BBSome complex is required for ciliogenesis but is dispensable for centriolar satellite function. This ciliogenic function is mediated in part by the Rab8 GDP/GTP exchange factor, which localizes to the basal body and contacts the BBSome. Rab8(GTP) enters the primary cilium and promotes extension of the ciliary membrane. Firstly the BBSome associates with the ciliary membrane and binds to RAB3IP/Rabin8, the guanosyl exchange factor (GEF) for Rab8 and then the Rab8-GTP localizes to the cilium and promotes docking and fusion of carrier vesicles to the base of the ciliary membrane. The BBSome complex, together with the LTZL1, controls SMO ciliary trafficking and contributes to the sonic hedgehog (SHH) pathway regulation. Required for proper BBSome complex assembly and its ciliary localization. The polypeptide is BBSome complex member BBS2 (Bbs2) (Mus musculus (Mouse)).